Consider the following 328-residue polypeptide: MVKLAIDMMGGDNAPDIVLEAVQKAVEDFKDLEIILFGDEKKYNLNHERIEFRHCSEKIEMEDEPVRAIKRKKDSSMVKMAEAVKSGEADGCVSAGNTGALMSAGLFIVGRIKGVARPALVVTLPTIDGKGFVFLDVGANADAKPEHLLQYAQLGDIYAQKIRGIDNPKISLLNIGTEPAKGNSLTKKSYELLNHDHSLNFVGNIEAKTLMDGDTDVVVTDGYTGNMVLKNLEGTAKSIGKMLKDTIMSSTKNKLAGAILKKDLAEFAKKMDYSEYGGSVLLGLEGTVVKAHGSSNAKAFYSAIRQAKIAGEQNIVQTMKETVGESNE.

Belongs to the PlsX family. Homodimer. Probably interacts with PlsY.

The protein resides in the cytoplasm. The enzyme catalyses a fatty acyl-[ACP] + phosphate = an acyl phosphate + holo-[ACP]. It participates in lipid metabolism; phospholipid metabolism. Functionally, catalyzes the reversible formation of acyl-phosphate (acyl-PO(4)) from acyl-[acyl-carrier-protein] (acyl-ACP). This enzyme utilizes acyl-ACP as fatty acyl donor, but not acyl-CoA. This is Phosphate acyltransferase from Staphylococcus aureus (strain USA300).